Here is a 488-residue protein sequence, read N- to C-terminus: Glycogen synthase (488 aa).

An ADP-alpha-D-glucose-binding site is contributed by arginine 20.

It belongs to the glycosyltransferase 1 family. Bacterial/plant glycogen synthase subfamily.

It carries out the reaction [(1-&gt;4)-alpha-D-glucosyl](n) + ADP-alpha-D-glucose = [(1-&gt;4)-alpha-D-glucosyl](n+1) + ADP + H(+). The protein operates within glycan biosynthesis; glycogen biosynthesis. Synthesizes alpha-1,4-glucan chains using ADP-glucose. The protein is Glycogen synthase of Chlorobaculum parvum (strain DSM 263 / NCIMB 8327) (Chlorobium vibrioforme subsp. thiosulfatophilum).